A 405-amino-acid polypeptide reads, in one-letter code: Accessory Sec system protein translocase subunit SecY2 (405 aa).

10 helical membrane-spanning segments follow: residues 14 to 34, 63 to 83, 104 to 124, 131 to 151, 156 to 176, 191 to 211, 247 to 267, 285 to 305, 343 to 363, and 368 to 388; these read LFTL…LPFV, LSIF…WQMF, MYLT…RLPV, ILVV…LVWL, ASMG…LNIP, GIIV…ALMY, MYVM…GFIF, PLWV…FAFV, FSVI…LFVL, and LLRL…IFTI.

This sequence belongs to the SecY/SEC61-alpha family. SecY2 subfamily. Component of the accessory SecA2/SecY2 protein translocase complex required to export cell wall proteins. May form heterotrimers with SecE and SecG subunits.

The protein resides in the cell membrane. Functionally, part of the accessory SecA2/SecY2 system specifically required for export of possible cell wall proteins. The central subunit of a protein translocation channel. The chain is Accessory Sec system protein translocase subunit SecY2 from Streptococcus pneumoniae (strain CGSP14).